We begin with the raw amino-acid sequence, 199 residues long: Cytochrome c oxidase assembly protein CtaG (199 aa).

The Cytoplasmic segment spans residues 1–12; that stretch reads MTNTPQTPPKER. The chain crosses the membrane as a helical; Signal-anchor for type II membrane protein span at residues 13–35; the sequence is ANGVIVGACLAFVAGMVGMAYAA. Residues 36–199 lie on the Periplasmic side of the membrane; it reads VPLYDMFCRV…VKDGETENRL (164 aa).

It belongs to the COX11/CtaG family.

The protein localises to the cell inner membrane. Functionally, exerts its effect at some terminal stage of cytochrome c oxidase synthesis, probably by being involved in the insertion of the copper B into subunit I. This Sinorhizobium fredii (strain NBRC 101917 / NGR234) protein is Cytochrome c oxidase assembly protein CtaG.